Consider the following 104-residue polypeptide: ATP-dependent Clp protease adapter protein ClpS (104 aa).

Belongs to the ClpS family. As to quaternary structure, binds to the N-terminal domain of the chaperone ClpA.

Functionally, involved in the modulation of the specificity of the ClpAP-mediated ATP-dependent protein degradation. The protein is ATP-dependent Clp protease adapter protein ClpS of Bordetella avium (strain 197N).